Reading from the N-terminus, the 655-residue chain is UvrABC system protein C (655 aa).

In terms of domain architecture, GIY-YIG spans 16–95; sequence TDPGVYRFRD…IKEFAPRYNL (80 aa). In terms of domain architecture, UVR spans 207–242; the sequence is KRFIGTLEKQMAEAVAELDYERAARLRDDVIALRKV.

Belongs to the UvrC family. In terms of assembly, interacts with UvrB in an incision complex.

The protein localises to the cytoplasm. The UvrABC repair system catalyzes the recognition and processing of DNA lesions. UvrC both incises the 5' and 3' sides of the lesion. The N-terminal half is responsible for the 3' incision and the C-terminal half is responsible for the 5' incision. The protein is UvrABC system protein C of Renibacterium salmoninarum (strain ATCC 33209 / DSM 20767 / JCM 11484 / NBRC 15589 / NCIMB 2235).